Consider the following 138-residue polypeptide: Large ribosomal subunit protein uL16 (138 aa).

It belongs to the universal ribosomal protein uL16 family. As to quaternary structure, part of the 50S ribosomal subunit.

Functionally, binds 23S rRNA and is also seen to make contacts with the A and possibly P site tRNAs. The polypeptide is Large ribosomal subunit protein uL16 (Chlamydia felis (strain Fe/C-56) (Chlamydophila felis)).